A 392-amino-acid polypeptide reads, in one-letter code: Zinc transporter zipt-7.1 (392 aa).

Asn63 carries an N-linked (GlcNAc...) asparagine glycan. Transmembrane regions (helical) follow at residues 82–102 (VFSL…LFFI) and 114–134 (ILLA…IIPH). Residues 139 to 162 (HSHGAHDHDHAHSHDHAHNDHSHD) form a disordered region. Over residues 142–162 (GAHDHDHAHSHDHAHNDHSHD) the composition is skewed to basic and acidic residues. Residues 170-190 (GIYVIAGILVFMMVEQLVRII) form a helical membrane-spanning segment. A glycan (N-linked (GlcNAc...) asparagine) is linked at Asn248. A run of 3 helical transmembrane segments spans residues 255–275 (IGAS…TVLL), 304–324 (VTAL…NPVL), and 331–351 (GAIM…SVIP). Asn361 carries N-linked (GlcNAc...) asparagine glycosylation. The helical transmembrane segment at 371–391 (SLVHLIAICMGVGMMYIVSLV) threads the bilayer.

It belongs to the ZIP transporter (TC 2.A.5) family. KE4/Catsup subfamily.

It is found in the membrane. Its function is as follows. Zinc transporter which regulates intracellular zinc levels. Required for spermatogenesis in both hermaphrodites and males where it resides in an inactive form in immature sperm, spermatids, but is likely activated in response to reduced spe-4 and spe-6 function. Upon activation, mediates the release of zinc from internal stores in spermatids into the cytoplasm. The resulting increase in cytoplasmic zinc levels promotes spermatid activation and subsequent differentiation into mature motile sperm that are capable of fertilization. The protein is Zinc transporter zipt-7.1 of Caenorhabditis briggsae.